Here is a 206-residue protein sequence, read N- to C-terminus: tRNA (guanine-N(7)-)-methyltransferase (206 aa).

4 residues coordinate S-adenosyl-L-methionine: Glu37, Glu62, Asp89, and Asp112. Asp112 is a catalytic residue. Residues Lys116 and Asp148 each contribute to the substrate site.

The protein belongs to the class I-like SAM-binding methyltransferase superfamily. TrmB family.

It catalyses the reaction guanosine(46) in tRNA + S-adenosyl-L-methionine = N(7)-methylguanosine(46) in tRNA + S-adenosyl-L-homocysteine. Its pathway is tRNA modification; N(7)-methylguanine-tRNA biosynthesis. Catalyzes the formation of N(7)-methylguanine at position 46 (m7G46) in tRNA. The protein is tRNA (guanine-N(7)-)-methyltransferase of Myxococcus xanthus (strain DK1622).